The sequence spans 227 residues: MAYPFQLGLQDATSPIMEELLHFHDHTLMIVFLISSLVLYIISLMLTTKLTHTSTMDAQEVETVWTILPAIILISIALPSLRILYMMDEINNPSLTVKTMGHQWYWSYEYTDYEDLNFDSYMIPTQELKPGELRLLEVDNRVVLPMEMTIRMLVSSEDVLHSWAVPSLGLKTDAIPGRLNQTTLMATRPGLYYGQCSEICGSNHSFMPIVLEMVPLPYFEAWSTLMM.

Over 1 to 14 the chain is Mitochondrial intermembrane; the sequence is MAYPFQLGLQDATS. Residues 15–45 form a helical membrane-spanning segment; the sequence is PIMEELLHFHDHTLMIVFLISSLVLYIISLM. Residues 46–59 are Mitochondrial matrix-facing; the sequence is LTTKLTHTSTMDAQ. Residues 60–87 form a helical membrane-spanning segment; that stretch reads EVETVWTILPAIILISIALPSLRILYMM. Residues 88–227 lie on the Mitochondrial intermembrane side of the membrane; sequence DEINNPSLTV…YFEAWSTLMM (140 aa). The Cu cation site is built by histidine 161, cysteine 196, glutamate 198, cysteine 200, histidine 204, and methionine 207. Glutamate 198 contacts Mg(2+). Tyrosine 218 carries the phosphotyrosine modification.

This sequence belongs to the cytochrome c oxidase subunit 2 family. Component of the cytochrome c oxidase (complex IV, CIV), a multisubunit enzyme composed of 14 subunits. The complex is composed of a catalytic core of 3 subunits MT-CO1, MT-CO2 and MT-CO3, encoded in the mitochondrial DNA, and 11 supernumerary subunits COX4I, COX5A, COX5B, COX6A, COX6B, COX6C, COX7A, COX7B, COX7C, COX8 and NDUFA4, which are encoded in the nuclear genome. The complex exists as a monomer or a dimer and forms supercomplexes (SCs) in the inner mitochondrial membrane with NADH-ubiquinone oxidoreductase (complex I, CI) and ubiquinol-cytochrome c oxidoreductase (cytochrome b-c1 complex, complex III, CIII), resulting in different assemblies (supercomplex SCI(1)III(2)IV(1) and megacomplex MCI(2)III(2)IV(2)). Found in a complex with TMEM177, COA6, COX18, COX20, SCO1 and SCO2. Interacts with TMEM177 in a COX20-dependent manner. Interacts with COX20. Interacts with COX16. It depends on Cu cation as a cofactor.

It localises to the mitochondrion inner membrane. It carries out the reaction 4 Fe(II)-[cytochrome c] + O2 + 8 H(+)(in) = 4 Fe(III)-[cytochrome c] + 2 H2O + 4 H(+)(out). In terms of biological role, component of the cytochrome c oxidase, the last enzyme in the mitochondrial electron transport chain which drives oxidative phosphorylation. The respiratory chain contains 3 multisubunit complexes succinate dehydrogenase (complex II, CII), ubiquinol-cytochrome c oxidoreductase (cytochrome b-c1 complex, complex III, CIII) and cytochrome c oxidase (complex IV, CIV), that cooperate to transfer electrons derived from NADH and succinate to molecular oxygen, creating an electrochemical gradient over the inner membrane that drives transmembrane transport and the ATP synthase. Cytochrome c oxidase is the component of the respiratory chain that catalyzes the reduction of oxygen to water. Electrons originating from reduced cytochrome c in the intermembrane space (IMS) are transferred via the dinuclear copper A center (CU(A)) of subunit 2 and heme A of subunit 1 to the active site in subunit 1, a binuclear center (BNC) formed by heme A3 and copper B (CU(B)). The BNC reduces molecular oxygen to 2 water molecules using 4 electrons from cytochrome c in the IMS and 4 protons from the mitochondrial matrix. In Lycaon pictus (African wild dog), this protein is Cytochrome c oxidase subunit 2 (MT-CO2).